We begin with the raw amino-acid sequence, 89 residues long: Small ribosomal subunit protein uS15 (89 aa).

This sequence belongs to the universal ribosomal protein uS15 family. Part of the 30S ribosomal subunit. Forms a bridge to the 50S subunit in the 70S ribosome, contacting the 23S rRNA.

Functionally, one of the primary rRNA binding proteins, it binds directly to 16S rRNA where it helps nucleate assembly of the platform of the 30S subunit by binding and bridging several RNA helices of the 16S rRNA. Its function is as follows. Forms an intersubunit bridge (bridge B4) with the 23S rRNA of the 50S subunit in the ribosome. The chain is Small ribosomal subunit protein uS15 from Aliivibrio salmonicida (strain LFI1238) (Vibrio salmonicida (strain LFI1238)).